The following is a 196-amino-acid chain: Probable peptidyl-prolyl cis-trans isomerase (196 aa).

Positions Met1–Ala26 are cleaved as a signal peptide. The PPIase cyclophilin-type domain maps to Pro29–Asp194.

Belongs to the cyclophilin-type PPIase family.

Its subcellular location is the periplasm. The enzyme catalyses [protein]-peptidylproline (omega=180) = [protein]-peptidylproline (omega=0). In terms of biological role, PPIases accelerate the folding of proteins. It catalyzes the cis-trans isomerization of proline imidic peptide bonds in oligopeptides. The sequence is that of Probable peptidyl-prolyl cis-trans isomerase (ppi) from Brucella abortus (strain 2308).